Here is a 270-residue protein sequence, read N- to C-terminus: Imidazole glycerol phosphate synthase subunit HisF (270 aa).

Active-site residues include Asp11 and Asp135.

The protein belongs to the HisA/HisF family. Heterodimer of HisH and HisF.

The protein localises to the cytoplasm. It carries out the reaction 5-[(5-phospho-1-deoxy-D-ribulos-1-ylimino)methylamino]-1-(5-phospho-beta-D-ribosyl)imidazole-4-carboxamide + L-glutamine = D-erythro-1-(imidazol-4-yl)glycerol 3-phosphate + 5-amino-1-(5-phospho-beta-D-ribosyl)imidazole-4-carboxamide + L-glutamate + H(+). It functions in the pathway amino-acid biosynthesis; L-histidine biosynthesis; L-histidine from 5-phospho-alpha-D-ribose 1-diphosphate: step 5/9. Functionally, IGPS catalyzes the conversion of PRFAR and glutamine to IGP, AICAR and glutamate. The HisF subunit catalyzes the cyclization activity that produces IGP and AICAR from PRFAR using the ammonia provided by the HisH subunit. The chain is Imidazole glycerol phosphate synthase subunit HisF from Haloquadratum walsbyi (strain DSM 16790 / HBSQ001).